We begin with the raw amino-acid sequence, 124 residues long: uncharacterized protein (124 aa).

A signal peptide spans 1–21 (MFLLSLLHFFHPSLIPSLSLS).

This is an uncharacterized protein from Schizosaccharomyces pombe (strain 972 / ATCC 24843) (Fission yeast).